The primary structure comprises 448 residues: C4-dicarboxylate transport protein (448 aa).

Transmembrane regions (helical) follow at residues Ser13 to Pro33, Leu49 to Met69, Leu81 to Val101, Ala149 to Leu169, Ile193 to Ile213, Leu227 to Ser247, Val294 to Leu314, Thr336 to Phe356, and Ile357 to Ile377.

The protein belongs to the dicarboxylate/amino acid:cation symporter (DAACS) (TC 2.A.23) family.

The protein resides in the cell inner membrane. In terms of biological role, responsible for the transport of dicarboxylates such as succinate, fumarate, and malate from the periplasm across the membrane. In Albidiferax ferrireducens (strain ATCC BAA-621 / DSM 15236 / T118) (Rhodoferax ferrireducens), this protein is C4-dicarboxylate transport protein.